The sequence spans 489 residues: E3 ubiquitin-protein ligase RGLG1 (489 aa).

Positions 1–10 are enriched in basic and acidic residues; it reads MGGGNSKEES. Residues 1–125 are disordered; sequence MGGGNSKEES…SQSQVADRKK (125 aa). The N-myristoyl glycine moiety is linked to residue glycine 2. Over residues 11–23 the composition is skewed to low complexity; that stretch reads SSPSSSSWASHQS. Residues 34–57 show a composition bias toward pro residues; that stretch reads YPPPPTYAPAPSPAPAPAPVPAPS. Low complexity predominate over residues 58–75; sequence PASSYGPQYSQEGYASQP. Positions 76 to 88 are enriched in pro residues; it reads NNPPPPTYAPAPS. In terms of domain architecture, VWFA spans 156-376; the sequence is NLIVGIDFTK…KETEFALSAL (221 aa). An RING-type zinc finger spans residues 446–479; the sequence is CPICLSNPKNMAFGCGHQTCCECGPDLKVCPICR.

Interacts with the heterodimer UBC35/UEV1B. Interacts with ERF053. Interacts with PP2CA. Post-translationally, N-myristoylated. Ubiquitously expressed.

The protein resides in the cell membrane. Its subcellular location is the nucleus. The catalysed reaction is S-ubiquitinyl-[E2 ubiquitin-conjugating enzyme]-L-cysteine + [acceptor protein]-L-lysine = [E2 ubiquitin-conjugating enzyme]-L-cysteine + N(6)-ubiquitinyl-[acceptor protein]-L-lysine.. Functionally, E3 ubiquitin-protein ligase that mediates the formation of 'Lys-63'-linked ubiquitin chains. Regulates apical dominance by acting on the auxin transport proteins abundance. Together with RGLG5, mediates the ubiquitination and subsequent proteasomal degradation of the target protein PP2CA. Functions as a positive regulator of abscisic acid (ABA) signaling through ABA-dependent degradation of PP2CA, a major inhibitor of ABA signaling. Acts as a negative regulator of drought stress response. The chain is E3 ubiquitin-protein ligase RGLG1 from Arabidopsis thaliana (Mouse-ear cress).